The chain runs to 165 residues: MPAKTTSARLTHLDDAGLPTMVDVSDKQVTARSATAESRVHFPAAVAAQLRANGLRSAKGGIVETAVIAGTMAVKRTHELIPFCHPLPIDGCRFEIDWAGAQVLQIVCTVRCVHRTGVEMEALTGASVAALTVYDMCKALSHTMRIGPTKLLSKRGGKRDIGAAR.

Substrate contacts are provided by residues 83–85 (FCH) and 120–121 (ME). Residue D135 is part of the active site.

Belongs to the MoaC family. Homohexamer; trimer of dimers.

The enzyme catalyses (8S)-3',8-cyclo-7,8-dihydroguanosine 5'-triphosphate = cyclic pyranopterin phosphate + diphosphate. It participates in cofactor biosynthesis; molybdopterin biosynthesis. Its function is as follows. Catalyzes the conversion of (8S)-3',8-cyclo-7,8-dihydroguanosine 5'-triphosphate to cyclic pyranopterin monophosphate (cPMP). The sequence is that of Cyclic pyranopterin monophosphate synthase from Xanthomonas campestris pv. campestris (strain 8004).